The sequence spans 518 residues: Glutamate--cysteine ligase (518 aa).

The protein belongs to the glutamate--cysteine ligase type 1 family. Type 1 subfamily.

The catalysed reaction is L-cysteine + L-glutamate + ATP = gamma-L-glutamyl-L-cysteine + ADP + phosphate + H(+). Its pathway is sulfur metabolism; glutathione biosynthesis; glutathione from L-cysteine and L-glutamate: step 1/2. In Cronobacter sakazakii (strain ATCC BAA-894) (Enterobacter sakazakii), this protein is Glutamate--cysteine ligase.